We begin with the raw amino-acid sequence, 129 residues long: D-ribose pyranase (129 aa).

The Proton donor role is filled by His20. Substrate-binding positions include Asp28, His96, and 118-120 (YAN).

Belongs to the RbsD / FucU family. RbsD subfamily. In terms of assembly, homodecamer.

The protein localises to the cytoplasm. The enzyme catalyses beta-D-ribopyranose = beta-D-ribofuranose. Its pathway is carbohydrate metabolism; D-ribose degradation; D-ribose 5-phosphate from beta-D-ribopyranose: step 1/2. In terms of biological role, catalyzes the interconversion of beta-pyran and beta-furan forms of D-ribose. This is D-ribose pyranase from Staphylococcus haemolyticus (strain JCSC1435).